The chain runs to 147 residues: Large ribosomal subunit protein bL9 (147 aa).

The protein belongs to the bacterial ribosomal protein bL9 family.

Its function is as follows. Binds to the 23S rRNA. This Geotalea daltonii (strain DSM 22248 / JCM 15807 / FRC-32) (Geobacter daltonii) protein is Large ribosomal subunit protein bL9.